The following is a 170-amino-acid chain: Urease accessory protein UreE (170 aa).

The protein belongs to the UreE family.

It localises to the cytoplasm. Functionally, involved in urease metallocenter assembly. Binds nickel. Probably functions as a nickel donor during metallocenter assembly. The protein is Urease accessory protein UreE of Helicobacter pylori (strain J99 / ATCC 700824) (Campylobacter pylori J99).